The following is a 469-amino-acid chain: Protein RUFY3 (469 aa).

Residues Thr-5 and Thr-12 each carry the phosphothreonine modification. Ser-34 and Ser-49 each carry phosphoserine. Residue Thr-51 is modified to Phosphothreonine. Residues 95 to 227 enclose the RUN domain; that stretch reads DSDYAPLQQF…IDANFCMKGE (133 aa). Coiled-coil stretches lie at residues 271 to 362 and 422 to 463; these read NRHL…VEKE and KSEL…AANK.

As to quaternary structure, interacts with PAK1. Interacts (via C-terminus) with Ras-related Rab-5 proteins. Interacts (via C-terminus) with Ras-related Rap-2 proteins. Interacts with PIK3CA and PIK3R1. Interacts (via N-terminus) with FSCN1; this interaction induces neuron axon development. Interacts with DBN1. Interacts (via the second coiled coil) with GTP-, but not GDP-bound ARL8A and ARL8B. Interacts with dynactin/DCTN1 and the dynein intermediate chain DYNC1I1/2. Directly interacts with DYNC1LI1. Post-translationally, phosphorylated by PAK1. Isoform 1 is partially phosphorylated. In terms of tissue distribution, overexpressed in gastric cancer cells and tissues (at protein level).

The protein resides in the cytoplasm. It localises to the endomembrane system. It is found in the cell projection. The protein localises to the invadopodium. Its subcellular location is the perikaryon. The protein resides in the growth cone. It localises to the filopodium. It is found in the lamellipodium. The protein localises to the lysosome. Functionally, ARL8 effector that promotes the coupling of endolysosomes to dynein-dynactin for retrograde transport along microtubules. Acts by binding both GTP-bound ARL8 and dynein-dynactin. In nonneuronal cells, promotes concentration of endolysosomes in the juxtanuclear area. In hippocampal neurons, drives retrograde transport of endolysosomes from the axon to the soma. Plays a role in the generation of neuronal polarity formation and axon growth. Implicated in the formation of a single axon by developing neurons. May inhibit the formation of additional axons by inhibition of PI3K in minor neuronal processes. Plays a role in the formation of F-actin-enriched protrusive structures at the cell periphery. Plays a role in cytoskeletal organization by regulating the subcellular localization of FSCN1 and DBN1 at axonal growth cones. In Homo sapiens (Human), this protein is Protein RUFY3.